Here is a 660-residue protein sequence, read N- to C-terminus: Bifunctional polymyxin resistance protein ArnA (660 aa).

Positions 1 to 304 are formyltransferase ArnAFT; the sequence is MKAVIFAYHD…TLGLVAGARL (304 aa). Histidine 104 functions as the Proton donor; for formyltransferase activity in the catalytic mechanism. (6R)-10-formyltetrahydrofolate is bound by residues arginine 114 and 136–140; that span reads VKRAD. Residues 314–660 are dehydrogenase ArnADH; sequence RRIRVLILGV…RSVDVAERAS (347 aa). NAD(+)-binding positions include aspartate 347 and 368–369; that span reads DI. UDP-alpha-D-glucuronate contacts are provided by residues alanine 393, tyrosine 398, and 432–433; that span reads TS. The active-site Proton acceptor; for decarboxylase activity is the glutamate 434. UDP-alpha-D-glucuronate is bound by residues arginine 460, asparagine 492, 526 to 535, and tyrosine 613; that span reads KLIDGGQQKR. Arginine 619 acts as the Proton donor; for decarboxylase activity in catalysis.

This sequence in the N-terminal section; belongs to the Fmt family. UDP-L-Ara4N formyltransferase subfamily. In the C-terminal section; belongs to the NAD(P)-dependent epimerase/dehydratase family. UDP-glucuronic acid decarboxylase subfamily. Homohexamer, formed by a dimer of trimers.

It carries out the reaction UDP-alpha-D-glucuronate + NAD(+) = UDP-beta-L-threo-pentopyranos-4-ulose + CO2 + NADH. The catalysed reaction is UDP-4-amino-4-deoxy-beta-L-arabinose + (6R)-10-formyltetrahydrofolate = UDP-4-deoxy-4-formamido-beta-L-arabinose + (6S)-5,6,7,8-tetrahydrofolate + H(+). The protein operates within nucleotide-sugar biosynthesis; UDP-4-deoxy-4-formamido-beta-L-arabinose biosynthesis; UDP-4-deoxy-4-formamido-beta-L-arabinose from UDP-alpha-D-glucuronate: step 1/3. It functions in the pathway nucleotide-sugar biosynthesis; UDP-4-deoxy-4-formamido-beta-L-arabinose biosynthesis; UDP-4-deoxy-4-formamido-beta-L-arabinose from UDP-alpha-D-glucuronate: step 3/3. Its pathway is bacterial outer membrane biogenesis; lipopolysaccharide biosynthesis. Bifunctional enzyme that catalyzes the oxidative decarboxylation of UDP-glucuronic acid (UDP-GlcUA) to UDP-4-keto-arabinose (UDP-Ara4O) and the addition of a formyl group to UDP-4-amino-4-deoxy-L-arabinose (UDP-L-Ara4N) to form UDP-L-4-formamido-arabinose (UDP-L-Ara4FN). The modified arabinose is attached to lipid A and is required for resistance to polymyxin and cationic antimicrobial peptides. The polypeptide is Bifunctional polymyxin resistance protein ArnA (Salmonella paratyphi C (strain RKS4594)).